A 1295-amino-acid chain; its full sequence is Phosphoribosylformylglycinamidine synthase (1295 aa).

Residues 305–327 (WPGAATGSGGEIRDEGATGRGAK) form a disordered region. ATP contacts are provided by residues 307-318 (GAATGSGGEIRD), 386-388 (TGY), and A678. Positions 679, 718, 722, and 884 each coordinate Mg(2+). ATP is bound at residue S886. Residues 1041–1295 (KVAVLREQGG…IFRNARKQLG (255 aa)) enclose the Glutamine amidotransferase type-1 domain. Residue C1135 is the Nucleophile of the active site. Catalysis depends on residues H1260 and E1262.

It in the N-terminal section; belongs to the FGAMS family. Monomer.

Its subcellular location is the cytoplasm. It carries out the reaction N(2)-formyl-N(1)-(5-phospho-beta-D-ribosyl)glycinamide + L-glutamine + ATP + H2O = 2-formamido-N(1)-(5-O-phospho-beta-D-ribosyl)acetamidine + L-glutamate + ADP + phosphate + H(+). It participates in purine metabolism; IMP biosynthesis via de novo pathway; 5-amino-1-(5-phospho-D-ribosyl)imidazole from N(2)-formyl-N(1)-(5-phospho-D-ribosyl)glycinamide: step 1/2. Phosphoribosylformylglycinamidine synthase involved in the purines biosynthetic pathway. Catalyzes the ATP-dependent conversion of formylglycinamide ribonucleotide (FGAR) and glutamine to yield formylglycinamidine ribonucleotide (FGAM) and glutamate. The sequence is that of Phosphoribosylformylglycinamidine synthase from Salmonella choleraesuis (strain SC-B67).